Consider the following 570-residue polypeptide: Pre-mRNA 3'-end-processing factor FIP1 (570 aa).

Over residues 1-10 (MSAEEADKTT) the composition is skewed to basic and acidic residues. Positions 1–107 (MSAEEADKTT…SDDDDDDVRV (107 aa)) are disordered. Acidic residues predominate over residues 16–38 (AGDEEEEWLYGDEGESKETEEEE). A compositionally biased stretch (low complexity) spans 56–77 (DAPTTTNNSSDSATPPTTTTTT). Positions 87-104 (APGEDEDSESDSDDDDDD) are enriched in acidic residues. Residue Thr125 is modified to Phosphothreonine. Ser247 carries the post-translational modification Phosphoserine. 3 disordered regions span residues 300-328 (RRRHNLEGNNIQVISEHSSSEVEPEVQKM), 371-400 (PNFPPPTGGPPPSLIPTLDNSGHPGGYDGR), and 418-570 (GAVN…EAME). Residues 371-384 (PNFPPPTGGPPPSL) are compositionally biased toward pro residues. Basic and acidic residues-rich tracts occupy residues 436 to 462 (YPRRDKEREKERERERQRDRGHERDHS) and 476 to 506 (DEERYRSYRDYGDRGYERHRERASREKEERH). Composition is skewed to basic residues over residues 520-529 (KSSRSSSRRR) and 538-548 (HRRHKHKKSKR). Positions 549–562 (SKEGKEPSEERSAD) are enriched in basic and acidic residues.

It belongs to the FIP1 family.

The protein resides in the nucleus. In terms of biological role, involved in mRNA processing. The sequence is that of Pre-mRNA 3'-end-processing factor FIP1 (fip1l1) from Danio rerio (Zebrafish).